We begin with the raw amino-acid sequence, 120 residues long: Neuromedin-B (120 aa).

An N-terminal signal peptide occupies residues 1–29 (MSAVPLTRMLPLRFLTHLLLLSFIPLYFC). Positions 30–44 (MEFSEDARNIEKIRR) are excised as a propeptide. Methionine 54 carries the post-translational modification Methionine amide. Residues 58–120 (SLQDTYNPSE…MDDYIKTTQK (63 aa)) constitute a propeptide that is removed on maturation.

Belongs to the bombesin/neuromedin-B/ranatensin family. Brain, intestine, and ovaries and early embryos (stages 2 and 10).

It is found in the secreted. In terms of biological role, stimulates smooth muscle contraction. The chain is Neuromedin-B (nmb) from Xenopus laevis (African clawed frog).